Reading from the N-terminus, the 326-residue chain is Phospho-N-acetylmuramoyl-pentapeptide-transferase (326 aa).

The next 9 helical transmembrane spans lie at 3 to 23 (ISIS…PAFI), 51 to 71 (TMGG…VALF), 79 to 99 (VGMI…DDFL), 115 to 135 (LALQ…GGDM), 138 to 158 (IFGY…FWLV), 169 to 189 (GIDG…GVIA), 195 to 215 (MDIL…FVFN), 221 to 243 (VFMG…MALH), and 304 to 324 (VDFF…AILY).

The protein belongs to the glycosyltransferase 4 family. MraY subfamily. It depends on Mg(2+) as a cofactor.

It is found in the cell membrane. It carries out the reaction UDP-N-acetyl-alpha-D-muramoyl-L-alanyl-gamma-D-glutamyl-L-lysyl-D-alanyl-D-alanine + di-trans,octa-cis-undecaprenyl phosphate = Mur2Ac(oyl-L-Ala-gamma-D-Glu-L-Lys-D-Ala-D-Ala)-di-trans,octa-cis-undecaprenyl diphosphate + UMP. Its pathway is cell wall biogenesis; peptidoglycan biosynthesis. Catalyzes the initial step of the lipid cycle reactions in the biosynthesis of the cell wall peptidoglycan: transfers peptidoglycan precursor phospho-MurNAc-pentapeptide from UDP-MurNAc-pentapeptide onto the lipid carrier undecaprenyl phosphate, yielding undecaprenyl-pyrophosphoryl-MurNAc-pentapeptide, known as lipid I. The sequence is that of Phospho-N-acetylmuramoyl-pentapeptide-transferase from Streptococcus pneumoniae (strain Hungary19A-6).